The following is a 618-amino-acid chain: Pyranose 2-oxidase (618 aa).

The residue at position 170 (histidine 170) is a Tele-8alpha-FAD histidine. Substrate is bound by residues glutamine 441 and histidine 443. Residue histidine 540 is the Proton acceptor of the active site. Asparagine 583 is a catalytic residue.

The protein belongs to the GMC oxidoreductase family. As to quaternary structure, homotetramer. FAD is required as a cofactor.

It carries out the reaction D-glucose + O2 = 2-dehydro-D-glucose + H2O2. Catalyzes the oxidation of various aldopyranoses and disaccharides on carbon-2 to the corresponding 2-keto sugars concomitant with the reduction of O(2) to H(2)O(2). This Lyophyllum shimeji (Hon-shimeji) protein is Pyranose 2-oxidase (p2ox).